Here is a 364-residue protein sequence, read N- to C-terminus: Dual-specificity RNA methyltransferase RlmN (364 aa).

The Proton acceptor role is filled by glutamate 93. In terms of domain architecture, Radical SAM core spans 99–337 (EDDRGTLCIS…ATIRKTRGDD (239 aa)). A disulfide bridge links cysteine 106 with cysteine 342. [4Fe-4S] cluster contacts are provided by cysteine 113, cysteine 117, and cysteine 120. S-adenosyl-L-methionine contacts are provided by residues 167-168 (GE), serine 199, 221-223 (SLH), and asparagine 299. Cysteine 342 functions as the S-methylcysteine intermediate in the catalytic mechanism.

This sequence belongs to the radical SAM superfamily. RlmN family. [4Fe-4S] cluster serves as cofactor.

The protein resides in the cytoplasm. It carries out the reaction adenosine(2503) in 23S rRNA + 2 reduced [2Fe-2S]-[ferredoxin] + 2 S-adenosyl-L-methionine = 2-methyladenosine(2503) in 23S rRNA + 5'-deoxyadenosine + L-methionine + 2 oxidized [2Fe-2S]-[ferredoxin] + S-adenosyl-L-homocysteine. The enzyme catalyses adenosine(37) in tRNA + 2 reduced [2Fe-2S]-[ferredoxin] + 2 S-adenosyl-L-methionine = 2-methyladenosine(37) in tRNA + 5'-deoxyadenosine + L-methionine + 2 oxidized [2Fe-2S]-[ferredoxin] + S-adenosyl-L-homocysteine. In terms of biological role, specifically methylates position 2 of adenine 2503 in 23S rRNA and position 2 of adenine 37 in tRNAs. m2A2503 modification seems to play a crucial role in the proofreading step occurring at the peptidyl transferase center and thus would serve to optimize ribosomal fidelity. This is Dual-specificity RNA methyltransferase RlmN from Dichelobacter nodosus (strain VCS1703A).